The following is a 436-amino-acid chain: uncharacterized protein (436 aa).

The N-terminal stretch at methionine 1–glycine 20 is a signal peptide. Coiled coils occupy residues glutamate 25–asparagine 87, methionine 154–glutamate 207, and glutamate 247–leucine 329. Over residues glutamate 371–serine 390 the composition is skewed to acidic residues. Positions glutamate 371–arginine 419 are disordered. Positions arginine 404–serine 415 are enriched in basic and acidic residues.

As to expression, component of the acid-insoluble organic matrix of the aragonitic skeleton (at protein level).

The protein resides in the secreted. This is an uncharacterized protein from Acropora millepora (Staghorn coral).